A 243-amino-acid chain; its full sequence is Probable transcriptional regulatory protein Patl_0550 (243 aa).

Belongs to the TACO1 family.

The protein resides in the cytoplasm. The polypeptide is Probable transcriptional regulatory protein Patl_0550 (Pseudoalteromonas atlantica (strain T6c / ATCC BAA-1087)).